A 232-amino-acid polypeptide reads, in one-letter code: Enolase-phosphatase E1 (232 aa).

It belongs to the HAD-like hydrolase superfamily. MasA/MtnC family. Monomer. Requires Mg(2+) as cofactor.

The catalysed reaction is 5-methylsulfanyl-2,3-dioxopentyl phosphate + H2O = 1,2-dihydroxy-5-(methylsulfanyl)pent-1-en-3-one + phosphate. It participates in amino-acid biosynthesis; L-methionine biosynthesis via salvage pathway; L-methionine from S-methyl-5-thio-alpha-D-ribose 1-phosphate: step 3/6. Its pathway is amino-acid biosynthesis; L-methionine biosynthesis via salvage pathway; L-methionine from S-methyl-5-thio-alpha-D-ribose 1-phosphate: step 4/6. Bifunctional enzyme that catalyzes the enolization of 2,3-diketo-5-methylthiopentyl-1-phosphate (DK-MTP-1-P) into the intermediate 2-hydroxy-3-keto-5-methylthiopentenyl-1-phosphate (HK-MTPenyl-1-P), which is then dephosphorylated to form the acireductone 1,2-dihydroxy-3-keto-5-methylthiopentene (DHK-MTPene). The polypeptide is Enolase-phosphatase E1 (Nocardia farcinica (strain IFM 10152)).